Reading from the N-terminus, the 390-residue chain is Oxysterol-binding protein 10 (390 aa).

Belongs to the OSBP family.

In Dictyostelium discoideum (Social amoeba), this protein is Oxysterol-binding protein 10 (osbJ).